We begin with the raw amino-acid sequence, 32 residues long: Glutathione S-transferase 8.2 (32 aa).

21-22 serves as a coordination point for glutathione; it reads QS.

Belongs to the GST superfamily. Alpha family. Homodimer. The N-terminus is blocked.

The protein localises to the cytoplasm. The catalysed reaction is RX + glutathione = an S-substituted glutathione + a halide anion + H(+). Functionally, conjugation of reduced glutathione to a wide number of exogenous and endogenous hydrophobic electrophiles. The protein is Glutathione S-transferase 8.2 of Dicentrarchus labrax (European seabass).